The primary structure comprises 470 residues: MSTSAAATLPLSVISKNLRKVFLSQKTRKIDWRYSQLKAIKKMMSENKDNITAAVKKDLGKHEFEIHQTEIVMIQTELDETISHLESWNKTEKVYSPLHFKPASSYILKEPLGVVLIMSPWNYPVNLALIPLIGAIAGGNCALLKLSRHSYNISKLLHGLLTKYLDPECFEFDCEGGAPYITELLEYKWDHIFFTGSVKVGKIVYQAAAKFLTPVTLELGGKNPCIVDKDTDIKLTARRLIWGKCWNAGQTCIGLDYLIVHKSILEPLIEEFKVVLKEFFGEDIKKSTSFARIISSAAAERLQQLFSMGKVVIGGEADIAERYIAPTVIVDPDLDSPLMQDEIFGPVLPIVTYENIDECLEFIQNRPHALTLYLFSRDQAIQDKVLDGTQSGSLMINDTLLHFTNPNLPFGGIGDSGIGSYHGKGTFDIFVHKRGLVQSTTKKFLDLPLRYPPYTPFSDNVAGKILGSGW.

An NAD(+)-binding site is contributed by Gly-196–Gly-201. Catalysis depends on residues Glu-218 and Cys-252.

Belongs to the aldehyde dehydrogenase family.

The protein resides in the cytoplasm. It catalyses the reaction an aldehyde + NADP(+) + H2O = a carboxylate + NADPH + 2 H(+). The catalysed reaction is an aldehyde + NAD(+) + H2O = a carboxylate + NADH + 2 H(+). The chain is Aldehyde dehydrogenase family 3 comG (comG) from Dictyostelium discoideum (Social amoeba).